A 430-amino-acid polypeptide reads, in one-letter code: MKQALRVAFGFLILWASVLHAEVRIVIDSGVDSGRPIGVVPFQWAGPGAAPEDIGGIVAADLRNSGKFNPLDRARLPQQPGSAQEVQPSAWSALGIDAVVVGQVTPNPDGSYNVAYQLVDTGGAPGTVLAQNSYKVNKQWLRYAGHTASDEVFEKLTGIKGAFRTRIAYVVQTNGGQFPYELRVSDYDGYNQFVVHRSPQPLMSPAWSPDGSKLAYVTFESGRSALVIQTLANGAVRQVASFPRHNGAPAFSPDGSKLAFALSKTGSLNLYVMDLASGQIRQVTDGRSNNTEPTWFPDSQNLAFTSDQAGRPQVYKVNINGGAPQRITWEGSQNQDADVSSDGKFMVMVSSNGGQQHIAKQDLATGGVQVLSSTFLDETPSLAPNGTMVIYSSSQGMGSVLNLVSTDGRFKARLPATDGQVKFPAWSPYL.

The first 21 residues, 1 to 21, serve as a signal peptide directing secretion; the sequence is MKQALRVAFGFLILWASVLHA.

Belongs to the TolB family. As to quaternary structure, the Tol-Pal system is composed of five core proteins: the inner membrane proteins TolA, TolQ and TolR, the periplasmic protein TolB and the outer membrane protein Pal. They form a network linking the inner and outer membranes and the peptidoglycan layer.

The protein resides in the periplasm. In terms of biological role, part of the Tol-Pal system, which plays a role in outer membrane invagination during cell division and is important for maintaining outer membrane integrity. TolB occupies a key intermediary position in the Tol-Pal system because it communicates directly with both membrane-embedded components, Pal in the outer membrane and TolA in the inner membrane. The chain is Tol-Pal system protein TolB from Shigella boydii serotype 18 (strain CDC 3083-94 / BS512).